The following is a 298-amino-acid chain: Putative GATA zinc finger domain-containing protein 25 (298 aa).

Residues 4–37 (DNKNKNDNYQESIQRIVNQRNNLLKEIENKINQQ) are a coiled coil. The disordered stretch occupies residues 148–227 (QQQLQQSHTK…RGRPSKPKPE (80 aa)). Residues 183–202 (EENEENEENEENEENEENEE) show a composition bias toward acidic residues. Over residues 203–212 (NKEKDVEVAK) the composition is skewed to basic and acidic residues. Over residues 214-223 (NKPKRGRPSK) the composition is skewed to basic residues. The segment at 229-256 (CFRYGTRSCPYWRKNVIKGELVDVCNAC) adopts a GATA-type; degenerate zinc-finger fold.

This Dictyostelium discoideum (Social amoeba) protein is Putative GATA zinc finger domain-containing protein 25 (gtaY).